The chain runs to 262 residues: GTP cyclohydrolase FolE2 (262 aa).

It belongs to the GTP cyclohydrolase IV family.

The enzyme catalyses GTP + H2O = 7,8-dihydroneopterin 3'-triphosphate + formate + H(+). Its pathway is cofactor biosynthesis; 7,8-dihydroneopterin triphosphate biosynthesis; 7,8-dihydroneopterin triphosphate from GTP: step 1/1. Functionally, converts GTP to 7,8-dihydroneopterin triphosphate. This chain is GTP cyclohydrolase FolE2, found in Dichelobacter nodosus (strain VCS1703A).